A 184-amino-acid polypeptide reads, in one-letter code: Photosystem I assembly protein Ycf4 (184 aa).

The next 2 helical transmembrane spans lie at 22–42 (FCWA…GTSS) and 57–77 (IIFF…LFIS).

Belongs to the Ycf4 family.

Its subcellular location is the plastid. It is found in the chloroplast thylakoid membrane. In terms of biological role, seems to be required for the assembly of the photosystem I complex. In Draba nemorosa (Woodland whitlowgrass), this protein is Photosystem I assembly protein Ycf4.